The primary structure comprises 607 residues: Elongation factor 4 (607 aa).

In terms of domain architecture, tr-type G spans 6-188; sequence DRIRNFSIIA…AIVARIPAPK (183 aa). Residues 18 to 23 and 135 to 138 each bind GTP; these read DHGKST and NKID.

Belongs to the TRAFAC class translation factor GTPase superfamily. Classic translation factor GTPase family. LepA subfamily.

It is found in the cell inner membrane. The catalysed reaction is GTP + H2O = GDP + phosphate + H(+). Required for accurate and efficient protein synthesis under certain stress conditions. May act as a fidelity factor of the translation reaction, by catalyzing a one-codon backward translocation of tRNAs on improperly translocated ribosomes. Back-translocation proceeds from a post-translocation (POST) complex to a pre-translocation (PRE) complex, thus giving elongation factor G a second chance to translocate the tRNAs correctly. Binds to ribosomes in a GTP-dependent manner. The sequence is that of Elongation factor 4 from Rhizorhabdus wittichii (strain DSM 6014 / CCUG 31198 / JCM 15750 / NBRC 105917 / EY 4224 / RW1) (Sphingomonas wittichii).